Reading from the N-terminus, the 395-residue chain is F-box only protein 7 (395 aa).

Residues 19–70 (NHDWSKLCPDILRKIIESLSSLDFYRAKIVCSDWYSVWKTCVKRPLRPWRII) form the F-box domain.

The protein is F-box only protein 7 (FBX7) of Arabidopsis thaliana (Mouse-ear cress).